The following is a 334-amino-acid chain: Protein-glutamate methylesterase/protein-glutamine glutaminase 1 (334 aa).

Positions 2–120 constitute a Response regulatory domain; that stretch reads NIGIVNDLPL…GAAGDTTKLL (119 aa). At Asp-53 the chain carries 4-aspartylphosphate. In terms of domain architecture, CheB-type methylesterase spans 145 to 334; that stretch reads RAGGGPLIAI…AGELAALARI (190 aa). Active-site residues include Ser-157, His-184, and Asp-277.

Belongs to the CheB family. Post-translationally, phosphorylated by CheA. Phosphorylation of the N-terminal regulatory domain activates the methylesterase activity.

Its subcellular location is the cytoplasm. It carries out the reaction [protein]-L-glutamate 5-O-methyl ester + H2O = L-glutamyl-[protein] + methanol + H(+). It catalyses the reaction L-glutaminyl-[protein] + H2O = L-glutamyl-[protein] + NH4(+). Its function is as follows. Involved in chemotaxis. Part of a chemotaxis signal transduction system that modulates chemotaxis in response to various stimuli. Catalyzes the demethylation of specific methylglutamate residues introduced into the chemoreceptors (methyl-accepting chemotaxis proteins or MCP) by CheR. Also mediates the irreversible deamidation of specific glutamine residues to glutamic acid. In Burkholderia lata (strain ATCC 17760 / DSM 23089 / LMG 22485 / NCIMB 9086 / R18194 / 383), this protein is Protein-glutamate methylesterase/protein-glutamine glutaminase 1.